The following is a 994-amino-acid chain: Alanine--tRNA ligase, chloroplastic/mitochondrial (994 aa).

Positions 1-29 (MGGLKLPPQTLHGIHGGRRPLTAPSSKPS) are disordered. Zn(2+)-binding residues include His672, His676, Cys774, and His778.

It belongs to the class-II aminoacyl-tRNA synthetase family. As to quaternary structure, monomer. It depends on Zn(2+) as a cofactor.

Its subcellular location is the plastid. The protein resides in the chloroplast. It localises to the mitochondrion. It catalyses the reaction tRNA(Ala) + L-alanine + ATP = L-alanyl-tRNA(Ala) + AMP + diphosphate. Catalyzes the attachment of alanine to tRNA(Ala) in a two-step reaction: alanine is first activated by ATP to form Ala-AMP and then transferred to the acceptor end of tRNA(Ala). Also edits incorrectly charged tRNA(Ala) via its editing domain. This Populus trichocarpa (Western balsam poplar) protein is Alanine--tRNA ligase, chloroplastic/mitochondrial.